A 385-amino-acid chain; its full sequence is Cyclin-A3-2 (385 aa).

A disordered region spans residues methionine 1–glycine 110. Low complexity-rich tracts occupy residues serine 7–proline 41, proline 74–proline 88, and proline 96–glycine 110.

Belongs to the cyclin family. Cyclin AB subfamily.

The sequence is that of Cyclin-A3-2 (CYCA3-2) from Oryza sativa subsp. japonica (Rice).